The chain runs to 205 residues: Imidazole glycerol phosphate synthase subunit HisH (205 aa).

One can recognise a Glutamine amidotransferase type-1 domain in the interval 1-205; the sequence is MIALVDYGGG…FFKMALGDKK (205 aa). Residue Cys-79 is the Nucleophile of the active site. Residues His-181 and Glu-183 contribute to the active site.

As to quaternary structure, heterodimer of HisH and HisF.

It localises to the cytoplasm. The enzyme catalyses 5-[(5-phospho-1-deoxy-D-ribulos-1-ylimino)methylamino]-1-(5-phospho-beta-D-ribosyl)imidazole-4-carboxamide + L-glutamine = D-erythro-1-(imidazol-4-yl)glycerol 3-phosphate + 5-amino-1-(5-phospho-beta-D-ribosyl)imidazole-4-carboxamide + L-glutamate + H(+). It catalyses the reaction L-glutamine + H2O = L-glutamate + NH4(+). It functions in the pathway amino-acid biosynthesis; L-histidine biosynthesis; L-histidine from 5-phospho-alpha-D-ribose 1-diphosphate: step 5/9. Functionally, IGPS catalyzes the conversion of PRFAR and glutamine to IGP, AICAR and glutamate. The HisH subunit catalyzes the hydrolysis of glutamine to glutamate and ammonia as part of the synthesis of IGP and AICAR. The resulting ammonia molecule is channeled to the active site of HisF. This Dehalococcoides mccartyi (strain CBDB1) protein is Imidazole glycerol phosphate synthase subunit HisH.